The chain runs to 66 residues: Large ribosomal subunit protein uL29 (66 aa).

Belongs to the universal ribosomal protein uL29 family.

The chain is Large ribosomal subunit protein uL29 from Roseiflexus castenholzii (strain DSM 13941 / HLO8).